A 500-amino-acid polypeptide reads, in one-letter code: Probable cytosol aminopeptidase (500 aa).

2 residues coordinate Mn(2+): K269 and D274. The active site involves K281. Mn(2+)-binding residues include D292, D351, and E353. R355 is a catalytic residue.

It belongs to the peptidase M17 family. The cofactor is Mn(2+).

The protein resides in the cytoplasm. The enzyme catalyses Release of an N-terminal amino acid, Xaa-|-Yaa-, in which Xaa is preferably Leu, but may be other amino acids including Pro although not Arg or Lys, and Yaa may be Pro. Amino acid amides and methyl esters are also readily hydrolyzed, but rates on arylamides are exceedingly low.. It catalyses the reaction Release of an N-terminal amino acid, preferentially leucine, but not glutamic or aspartic acids.. Its function is as follows. Presumably involved in the processing and regular turnover of intracellular proteins. Catalyzes the removal of unsubstituted N-terminal amino acids from various peptides. This Acidithiobacillus ferrooxidans (strain ATCC 23270 / DSM 14882 / CIP 104768 / NCIMB 8455) (Ferrobacillus ferrooxidans (strain ATCC 23270)) protein is Probable cytosol aminopeptidase.